A 125-amino-acid chain; its full sequence is Small ribosomal subunit protein uS13 (125 aa).

Residues 97–125 are disordered; it reads PVRGQKTRSNARTRKGPRPSRIKTKKKSS. Residues 101 to 125 are compositionally biased toward basic residues; that stretch reads QKTRSNARTRKGPRPSRIKTKKKSS.

Belongs to the universal ribosomal protein uS13 family. Part of the 30S ribosomal subunit. Forms a loose heterodimer with protein S19. Forms two bridges to the 50S subunit in the 70S ribosome.

Located at the top of the head of the 30S subunit, it contacts several helices of the 16S rRNA. In the 70S ribosome it contacts the 23S rRNA (bridge B1a) and protein L5 of the 50S subunit (bridge B1b), connecting the 2 subunits; these bridges are implicated in subunit movement. Contacts the tRNAs in the A and P-sites. The protein is Small ribosomal subunit protein uS13 of Thermotoga maritima (strain ATCC 43589 / DSM 3109 / JCM 10099 / NBRC 100826 / MSB8).